Reading from the N-terminus, the 894-residue chain is Translation initiation factor IF-2 (894 aa).

The disordered stretch occupies residues 47-305 (AHLNRENGSG…GSALQQSFQK (259 aa)). The span at 68 to 82 (STLNIPGTGGKSKSV) shows a compositional bias: polar residues. Basic and acidic residues-rich tracts occupy residues 93–159 (VKRD…KDKV) and 166–219 (DMTK…KWTD). The segment covering 254–269 (GRSRNAKAARPAKKGN) has biased composition (basic residues). Residues 270–283 (KHSESKADREEARA) are compositionally biased toward basic and acidic residues. In terms of domain architecture, tr-type G spans 393 to 562 (PRAPVVTIMG…LLQAEVLELK (170 aa)). The tract at residues 402–409 (GHVDHGKT) is G1. 402–409 (GHVDHGKT) lines the GTP pocket. Residues 427–431 (GITQH) form a G2 region. The tract at residues 448–451 (DTPG) is G3. GTP is bound by residues 448–452 (DTPGH) and 502–505 (NKID). Residues 502-505 (NKID) form a G4 region. The interval 538–540 (SAK) is G5.

Belongs to the TRAFAC class translation factor GTPase superfamily. Classic translation factor GTPase family. IF-2 subfamily.

Its subcellular location is the cytoplasm. Its function is as follows. One of the essential components for the initiation of protein synthesis. Protects formylmethionyl-tRNA from spontaneous hydrolysis and promotes its binding to the 30S ribosomal subunits. Also involved in the hydrolysis of GTP during the formation of the 70S ribosomal complex. The protein is Translation initiation factor IF-2 of Citrobacter koseri (strain ATCC BAA-895 / CDC 4225-83 / SGSC4696).